Here is a 227-residue protein sequence, read N- to C-terminus: GTP:AMP phosphotransferase AK3, mitochondrial (227 aa).

GTP contacts are provided by Gly17, Gly19, Lys20, Gly21, and Thr22. Residue Lys20 is modified to N6-succinyllysine. Position 34 is an N6-acetyllysine (Lys34). Ser37 is modified (phosphoserine). Positions Ser37–Ile66 are NMP. The AMP site is built by Ser38 and Arg43. Position 57 is an N6-succinyllysine (Lys57). Lys64 provides a ligand contact to AMP. An N6-acetyllysine; alternate mark is found at Lys64 and Lys80. An N6-succinyllysine; alternate mark is found at Lys64 and Lys80. AMP is bound by residues Gly91, Arg94, and Gln98. The tract at residues Ala127–Asp164 is LID. Residues Arg128, Tyr138, Asn139, Arg161, and Arg172 each coordinate GTP. An N6-acetyllysine; alternate mark is found at Lys174 and Lys189. An N6-succinyllysine; alternate mark is found at Lys174 and Lys189. Thr201 is a binding site for GTP. Lys203 bears the N6-acetyllysine mark.

The protein belongs to the adenylate kinase family. AK3 subfamily. In terms of assembly, monomer. In terms of tissue distribution, highly expressed in heart, skeletal muscle and liver, moderately expressed in pancreas and kidney, and weakly expressed in placenta, brain and lung.

It localises to the mitochondrion matrix. It catalyses the reaction a ribonucleoside 5'-triphosphate + AMP = a ribonucleoside 5'-diphosphate + ADP. The enzyme catalyses GTP + AMP = GDP + ADP. It carries out the reaction ITP + AMP = IDP + ADP. Inhibited by ATP. Mitochondrial adenylate kinase with a specific GTP:AMP phosphotransferase activity. Could also use ITP as phosphate donor. Its physiological function is to recycle GTP into GDP which is necessary for the TCA cycle in the mitochondrial matrix. This Homo sapiens (Human) protein is GTP:AMP phosphotransferase AK3, mitochondrial.